Reading from the N-terminus, the 190-residue chain is Xanthine phosphoribosyltransferase (190 aa).

Xanthine is bound by residues Leu20 and Asn27. Residue 128–132 (ANGQA) coordinates 5-phospho-alpha-D-ribose 1-diphosphate. Lys156 lines the xanthine pocket.

Belongs to the purine/pyrimidine phosphoribosyltransferase family. Xpt subfamily. As to quaternary structure, homodimer.

Its subcellular location is the cytoplasm. The enzyme catalyses XMP + diphosphate = xanthine + 5-phospho-alpha-D-ribose 1-diphosphate. Its pathway is purine metabolism; XMP biosynthesis via salvage pathway; XMP from xanthine: step 1/1. Converts the preformed base xanthine, a product of nucleic acid breakdown, to xanthosine 5'-monophosphate (XMP), so it can be reused for RNA or DNA synthesis. This Pediococcus pentosaceus (strain ATCC 25745 / CCUG 21536 / LMG 10740 / 183-1w) protein is Xanthine phosphoribosyltransferase.